The primary structure comprises 476 residues: DnaJ protein P58IPK homolog A (476 aa).

Positions 1–28 are cleaved as a signal peptide; the sequence is MVAMARWPWRVLLPLLLLHSSPVFFVFA. TPR repeat units follow at residues 36–69, 70–103, 116–150, 152–184, 185–218, 231–264, 269–302, and 304–336; these read PSTLFKRALEMMNLRKYDGSLGLLNAVLEVEPNH, SEAYRQRASVLRHKCRYKEAEGDYSKYLELKPGS, AQNALESAYGQFESHDFSKVLDYINKIVLVFSPDC, KAKLLKAKALLALKDYSTVISETGFILKEDEDN, LDALLLRGRAYYYLADHDVASRHYQKGLRLDPEH, LVKKTKSAEDNAAKGKLRVSAEDYKASLAMDPDH, VHLYLGLCKVLVKLGRGKEAISSCTEALNIDGEL, and DALTQRGEAKLLTEDWEGAVQDLKEAAQKSPQD. A J domain is found at 357–423; sequence DWYKILGISK…DKRVRYDRGE (67 aa).

Interacts with BIP1.

The protein resides in the endoplasmic reticulum lumen. Its function is as follows. May play a role in protein folding in the endoplasmic reticulum. This chain is DnaJ protein P58IPK homolog A, found in Oryza sativa subsp. japonica (Rice).